A 415-amino-acid polypeptide reads, in one-letter code: Actin-like protein 9 (415 aa).

Residues 1–22 (MDVNGHPKFQPSPETDGPLPLT) are disordered.

The protein belongs to the actin family. In terms of assembly, interacts with ACTL7A.

The protein localises to the cytoplasmic vesicle. Its subcellular location is the secretory vesicle. The protein resides in the acrosome. It is found in the cytoplasm. It localises to the cytoskeleton. The protein localises to the perinuclear theca. Its function is as follows. Testis-specic protein that plays an important role in fusion of proacrosomal vesicles and perinuclear theca formation. The protein is Actin-like protein 9 (Actl9) of Mus musculus (Mouse).